Here is a 278-residue protein sequence, read N- to C-terminus: HTH-type transcriptional activator RhaS (278 aa).

One can recognise an HTH araC/xylS-type domain in the interval 174–272 (NLLLAWLEDH…NWSPRDIRQG (99 aa)). 2 DNA-binding regions (H-T-H motif) span residues 191–212 (DAVA…KQQT) and 239–262 (VTDI…RREF).

As to quaternary structure, binds DNA as a dimer.

It is found in the cytoplasm. Functionally, activates expression of the rhaBAD and rhaT operons. The chain is HTH-type transcriptional activator RhaS from Shigella dysenteriae serotype 1 (strain Sd197).